The primary structure comprises 71 residues: MPLIDYFYVLQFENKEYFKAFKLDESGYLTSSDLHEASKIHNMLEVIEVASELKTKCNVQCEVREIQVVKR.

This chain is SPbeta prophage-derived uncharacterized protein YopF (yopF), found in Bacillus subtilis (strain 168).